The sequence spans 156 residues: Enhancer of split M1 protein (156 aa).

An N-terminal signal peptide occupies residues Met1–Gly19. Kazal-like domains are found at residues Ser23 to Ser81 and Lys96 to Cys156. 5 disulfides stabilise this stretch: Cys29–Cys62, Cys33–Cys55, Cys102–Cys135, Cys106–Cys128, and Cys114–Cys156.

This is Enhancer of split M1 protein from Drosophila simulans (Fruit fly).